Reading from the N-terminus, the 239-residue chain is Ribonuclease PH (239 aa).

Residues Arg-86 and Gly-124–Arg-126 each bind phosphate.

The protein belongs to the RNase PH family. Homohexameric ring arranged as a trimer of dimers.

It catalyses the reaction tRNA(n+1) + phosphate = tRNA(n) + a ribonucleoside 5'-diphosphate. In terms of biological role, phosphorolytic 3'-5' exoribonuclease that plays an important role in tRNA 3'-end maturation. Removes nucleotide residues following the 3'-CCA terminus of tRNAs; can also add nucleotides to the ends of RNA molecules by using nucleoside diphosphates as substrates, but this may not be physiologically important. Probably plays a role in initiation of 16S rRNA degradation (leading to ribosome degradation) during starvation. The polypeptide is Ribonuclease PH (Rhizobium leguminosarum bv. trifolii (strain WSM2304)).